The primary structure comprises 418 residues: Serpin H1 (418 aa).

A signal peptide spans 1-18; the sequence is MRALLLISTICLLARALA. Lys94 bears the N6-succinyllysine mark. N-linked (GlcNAc...) asparagine glycans are attached at residues Asn120 and Asn125. Residue Ser141 is modified to Phosphoserine. At Lys207 the chain carries N6-acetyllysine. An N6-succinyllysine modification is found at Lys296. An N6-acetyllysine modification is found at Lys319. The Prevents secretion from ER motif lies at 415-418; it reads RDEL.

This sequence belongs to the serpin family.

The protein resides in the endoplasmic reticulum lumen. Functionally, binds specifically to collagen. Could be involved as a chaperone in the biosynthetic pathway of collagen. The polypeptide is Serpin H1 (SERPINH1) (Bos taurus (Bovine)).